A 276-amino-acid polypeptide reads, in one-letter code: Shikimate dehydrogenase (NADP(+)) (276 aa).

Shikimate is bound by residues serine 20–serine 22 and threonine 67. Lysine 71 (proton acceptor) is an active-site residue. Position 83 (aspartate 83) interacts with NADP(+). Shikimate contacts are provided by asparagine 92 and aspartate 107. Residues glycine 131–alanine 135 and isoleucine 217 each bind NADP(+). Tyrosine 219 contributes to the shikimate binding site. Residue glycine 240 coordinates NADP(+).

It belongs to the shikimate dehydrogenase family. As to quaternary structure, homodimer.

The catalysed reaction is shikimate + NADP(+) = 3-dehydroshikimate + NADPH + H(+). The protein operates within metabolic intermediate biosynthesis; chorismate biosynthesis; chorismate from D-erythrose 4-phosphate and phosphoenolpyruvate: step 4/7. Involved in the biosynthesis of the chorismate, which leads to the biosynthesis of aromatic amino acids. Catalyzes the reversible NADPH linked reduction of 3-dehydroshikimate (DHSA) to yield shikimate (SA). The protein is Shikimate dehydrogenase (NADP(+)) of Acidiphilium cryptum (strain JF-5).